We begin with the raw amino-acid sequence, 86 residues long: uncharacterized protein (86 aa).

The segment at 1–21 is disordered; the sequence is MLSNSTSRNRHSKHNKKNTRE. Over residues 8-17 the composition is skewed to basic residues; the sequence is RNRHSKHNKK.

This is an uncharacterized protein from Acidianus convivator (ATV).